A 481-amino-acid chain; its full sequence is 2-succinylbenzoate--CoA ligase (481 aa).

This sequence belongs to the ATP-dependent AMP-binding enzyme family. MenE subfamily.

The catalysed reaction is 2-succinylbenzoate + ATP + CoA = 2-succinylbenzoyl-CoA + AMP + diphosphate. It functions in the pathway quinol/quinone metabolism; 1,4-dihydroxy-2-naphthoate biosynthesis; 1,4-dihydroxy-2-naphthoate from chorismate: step 5/7. Its pathway is quinol/quinone metabolism; menaquinone biosynthesis. In terms of biological role, converts 2-succinylbenzoate (OSB) to 2-succinylbenzoyl-CoA (OSB-CoA). The polypeptide is 2-succinylbenzoate--CoA ligase (Bacillus cytotoxicus (strain DSM 22905 / CIP 110041 / 391-98 / NVH 391-98)).